We begin with the raw amino-acid sequence, 206 residues long: Large ribosomal subunit protein uL4 (206 aa).

Belongs to the universal ribosomal protein uL4 family. Part of the 50S ribosomal subunit.

In terms of biological role, one of the primary rRNA binding proteins, this protein initially binds near the 5'-end of the 23S rRNA. It is important during the early stages of 50S assembly. It makes multiple contacts with different domains of the 23S rRNA in the assembled 50S subunit and ribosome. Functionally, forms part of the polypeptide exit tunnel. In Xanthobacter autotrophicus (strain ATCC BAA-1158 / Py2), this protein is Large ribosomal subunit protein uL4.